Reading from the N-terminus, the 1678-residue chain is Anaphase-promoting complex subunit 1 (1678 aa).

PC repeat units lie at residues 1089–1116 (SAGF…VNRL), 1156–1194 (GAII…PDFI), 1256–1293 (GACI…PLSA), and 1320–1354 (IISL…HANY).

It belongs to the APC1 family. As to quaternary structure, the APC/C is composed of at least 10 subunits.

Its subcellular location is the nucleus. The protein operates within protein modification; protein ubiquitination. Component of the anaphase promoting complex/cyclosome (APC/C), a cell cycle-regulated E3 ubiquitin-protein ligase complex that controls progression through mitosis and the G1 phase of the cell cycle. The APC/C complex controls several key steps in the cell cycle by mediating ubiquitination and subsequent degradation of target proteins such as cyclins. The APC/C complex is required for the female gametophyte development and is involved in several aspect of development by controlling cell division and cell elongation. Involved in the control of endoreduplication. The chain is Anaphase-promoting complex subunit 1 (APC1) from Arabidopsis thaliana (Mouse-ear cress).